The following is a 453-amino-acid chain: Argininosuccinate lyase (453 aa).

This sequence belongs to the lyase 1 family. Argininosuccinate lyase subfamily.

The protein localises to the cytoplasm. The catalysed reaction is 2-(N(omega)-L-arginino)succinate = fumarate + L-arginine. It participates in amino-acid biosynthesis; L-arginine biosynthesis; L-arginine from L-ornithine and carbamoyl phosphate: step 3/3. The sequence is that of Argininosuccinate lyase from Shewanella loihica (strain ATCC BAA-1088 / PV-4).